The primary structure comprises 644 residues: 3D-(3,5/4)-trihydroxycyclohexane-1,2-dione hydrolase (644 aa).

Residue Glu65 coordinates thiamine diphosphate. Residues 442 to 522 (SLPGDLQRMW…INVLLFDNSG (81 aa)) are thiamine pyrophosphate binding. Positions 493 and 520 each coordinate Mg(2+).

Belongs to the TPP enzyme family. The cofactor is Mg(2+). Thiamine diphosphate serves as cofactor.

The enzyme catalyses 3D-3,5/4-trihydroxycyclohexane-1,2-dione + H2O = 5-deoxy-D-glucuronate + H(+). The protein operates within polyol metabolism; myo-inositol degradation into acetyl-CoA; acetyl-CoA from myo-inositol: step 3/7. In terms of biological role, involved in the cleavage of the C1-C2 bond of 3D-(3,5/4)-trihydroxycyclohexane-1,2-dione (THcHDO) to yield 5-deoxy-glucuronate (5DG). In Bacillus thuringiensis (strain Al Hakam), this protein is 3D-(3,5/4)-trihydroxycyclohexane-1,2-dione hydrolase.